A 507-amino-acid chain; its full sequence is ATP synthase subunit alpha, chloroplastic (507 aa).

Position 170–177 (170–177 (GDRQTGKT)) interacts with ATP.

The protein belongs to the ATPase alpha/beta chains family. As to quaternary structure, F-type ATPases have 2 components, CF(1) - the catalytic core - and CF(0) - the membrane proton channel. CF(1) has five subunits: alpha(3), beta(3), gamma(1), delta(1), epsilon(1). CF(0) has four main subunits: a, b, b' and c.

It is found in the plastid. The protein localises to the chloroplast thylakoid membrane. The catalysed reaction is ATP + H2O + 4 H(+)(in) = ADP + phosphate + 5 H(+)(out). In terms of biological role, produces ATP from ADP in the presence of a proton gradient across the membrane. The alpha chain is a regulatory subunit. The chain is ATP synthase subunit alpha, chloroplastic from Vitis vinifera (Grape).